Reading from the N-terminus, the 389-residue chain is Shewanella-like protein phosphatase 1 (389 aa).

The N-terminal 53 residues, 1-53 (MASLYLNSLLPLPPSHPQKLLEPSSSSLLSTSNGNELALKPIVINGDPPTFVS), are a transit peptide targeting the chloroplast. Mn(2+) is bound by residues Asp64, His66, Asp102, and Asn137. Residue His138 is the Proton donor of the active site. Residues His242 and His314 each contribute to the Mn(2+) site.

Belongs to the metallophosphoesterase superfamily. SLP family. The cofactor is Mn(2+). As to expression, expressed in rosettes leaves, shoots and flowers (at protein level).

Its subcellular location is the plastid. It is found in the chloroplast. Its function is as follows. Shows phosphatase activity, hydrolyzing the artificial substrate para-nitrophenylphosphate (pNPP) in vitro. This Arabidopsis thaliana (Mouse-ear cress) protein is Shewanella-like protein phosphatase 1.